The following is a 425-amino-acid chain: Histidine--tRNA ligase 1 (425 aa).

This sequence belongs to the class-II aminoacyl-tRNA synthetase family. As to quaternary structure, homodimer.

It is found in the cytoplasm. It carries out the reaction tRNA(His) + L-histidine + ATP = L-histidyl-tRNA(His) + AMP + diphosphate + H(+). The polypeptide is Histidine--tRNA ligase 1 (Bacillus anthracis).